A 187-amino-acid polypeptide reads, in one-letter code: Interferon beta (187 aa).

An N-terminal signal peptide occupies residues 1-21 (MTNKCLLQIALLLCFSTTALS). Tyrosine 24 is modified (phosphotyrosine). Cysteine 52 and cysteine 162 are joined by a disulfide. An N-linked (GlcNAc...) asparagine glycan is attached at asparagine 101.

Belongs to the alpha/beta interferon family. Monomer.

It localises to the secreted. Type I interferon cytokine that plays a key role in the innate immune response to infection, developing tumors and other inflammatory stimuli. Signals via binding to high-affinity (IFNAR2) and low-affinity (IFNAR1) heterodimeric receptor, activating the canonical Jak-STAT signaling pathway resulting in transcriptional activation or repression of interferon-regulated genes that encode the effectors of the interferon response, such as antiviral proteins, regulators of cell proliferation and differentiation, and immunoregulatory proteins. Signals mostly via binding to a IFNAR1-IFNAR2 heterodimeric receptor, but can also function with IFNAR1 alone and independently of Jak-STAT pathways. Elicits a wide variety of responses, including antiviral and antibacterial activities, and can regulate the development of B-cells, myelopoiesis and lipopolysaccharide (LPS)-inducible production of tumor necrosis factor. Plays a role in neuronal homeostasis by regulating dopamine turnover and protecting dopaminergic neurons: acts by promoting neuronal autophagy and alpha-synuclein clearance, thereby preventing dopaminergic neuron loss. IFNB1 is more potent than interferon-alpha (IFN-alpha) in inducing the apoptotic and antiproliferative pathways required for control of tumor cell growth. This is Interferon beta from Homo sapiens (Human).